Reading from the N-terminus, the 351-residue chain is Probable minor fimbrial subunit LpfD (351 aa).

The first 22 residues, 1-22 (MKAAIALSLLGCVFGFSGKAFA), serve as a signal peptide directing secretion.

It belongs to the fimbrial protein family.

It is found in the fimbrium. Part of the lpfABCC'DE fimbrial operon. LP fimbriae may participate in the interaction with eukaryotic cells by assisting in microcolony formation. This chain is Probable minor fimbrial subunit LpfD (lpfD), found in Escherichia coli O157:H7.